Reading from the N-terminus, the 221-residue chain is MARFIAQLLLLASCVAAGQAVTAFLGERVTLTSYWRRVSLGPEIEVSWFKLGPGEEQVLIGRMHHDVIFIEWPFRGFFDIHRSANTFFLVVTAANISHDGNYLCRMKLGETEVTKQEHLSVVKPLTLSVHSERSQFPDFSVLTVTCTVNAFPHPHVQWLMPEGVEPAPTAANGGVMKEKDGSLSVAVDLSLPKPWHLPVTCVGKNDKEEAHGVYVSGYLSQ.

Residues 1-20 (MARFIAQLLLLASCVAAGQA) form the signal peptide. Ig-like domains are found at residues 21 to 120 (VTAF…EHLS) and 124 to 220 (PLTL…GYLS). Asparagine 95 carries N-linked (GlcNAc...) asparagine; by host glycosylation. Cysteines 146 and 201 form a disulfide.

As to quaternary structure, homohexamer. Interacts with human CSF1. Post-translationally, phosphorylated on serine and threonine by host.

The protein localises to the secreted. Its function is as follows. Plays diverse functions in immunomodulation and oncogenicity, maybe by acting as a functional receptor for human CSF1. May inhibit interferon secretion from mononuclear cells. Exhibits oncogenic activity in vitro. This chain is Secreted protein BARF1, found in Epstein-Barr virus (strain B95-8) (HHV-4).